A 412-amino-acid polypeptide reads, in one-letter code: Argininosuccinate synthase (412 aa).

ATP contacts are provided by residues 15–23 (AYSGGLDTS) and Ala-42. L-citrulline contacts are provided by Tyr-93 and Ser-98. Gly-123 is a binding site for ATP. Thr-125, Asn-129, and Asp-130 together coordinate L-aspartate. Residue Asn-129 coordinates L-citrulline. The L-citrulline site is built by Arg-133, Ser-185, Ser-194, Glu-270, and Tyr-282.

This sequence belongs to the argininosuccinate synthase family. Type 1 subfamily. As to quaternary structure, homotetramer.

The protein localises to the cytoplasm. The catalysed reaction is L-citrulline + L-aspartate + ATP = 2-(N(omega)-L-arginino)succinate + AMP + diphosphate + H(+). It functions in the pathway amino-acid biosynthesis; L-arginine biosynthesis; L-arginine from L-ornithine and carbamoyl phosphate: step 2/3. The protein is Argininosuccinate synthase of Psychrobacter cryohalolentis (strain ATCC BAA-1226 / DSM 17306 / VKM B-2378 / K5).